The following is a 156-amino-acid chain: DNA mismatch endonuclease Vsr (156 aa).

Asp51 and Thr63 together coordinate Mg(2+).

It belongs to the Vsr family. It depends on Mg(2+) as a cofactor. Requires Zn(2+) as cofactor.

Functionally, deamination of 5-methylcytosine in DNA results in T/G mismatches. If unrepaired, these mismatches can lead to C-to-T transition mutations. The very short patch (VSP) repair process in E.coli counteracts the mutagenic process by repairing the mismatches in favor of the G-containing strand. This enzyme is an endonuclease that nicks double-stranded DNA within the sequence CT(AT)GN or NT(AT)GG next to the thymidine residue that is mismatched to 2'-deoxyguanosine. The incision is mismatch-dependent and strand-specific. This is DNA mismatch endonuclease Vsr from Escherichia coli (strain K12).